A 1089-amino-acid chain; its full sequence is Platelet-derived growth factor receptor alpha (1089 aa).

A signal peptide spans 1–24; it reads MGTSHQVFLVLSCLLTGPGLISCQ. Ig-like C2-type domains follow at residues 25–113, 117–201, 202–306, 319–410, and 414–517; these read LLLP…SEIE, IYIY…FKTS, EFNV…KRVT, PTFG…FELS, and PASI…LKLV. Residues 25-528 are Extracellular-facing; that stretch reads LLLPSILPNE…PTLRSELTVA (504 aa). N-linked (GlcNAc...) asparagine glycosylation is found at asparagine 42, asparagine 76, asparagine 89, asparagine 103, and asparagine 179. Residues cysteine 49 and cysteine 100 are joined by a disulfide bond. Intrachain disulfides connect cysteine 150–cysteine 189 and cysteine 235–cysteine 290. 5 N-linked (GlcNAc...) asparagine glycosylation sites follow: asparagine 353, asparagine 359, asparagine 458, asparagine 468, and asparagine 506. Residues cysteine 435 and cysteine 501 are joined by a disulfide bond. Residues 529-549 traverse the membrane as a helical segment; sequence AAVLVLLVIVIVSLIVLVVIW. The Cytoplasmic segment spans residues 550-1089; sequence KQKPRYEIRW…SSDLVEDSFL (540 aa). 2 positions are modified to phosphotyrosine; by autocatalysis: tyrosine 572 and tyrosine 574. Residues 593-954 enclose the Protein kinase domain; it reads LVLGRILGSG…HLSEIVENLL (362 aa). Residues 599–607 and lysine 627 contribute to the ATP site; that span reads LGSGAFGKV. 6 positions are modified to phosphotyrosine; by autocatalysis: tyrosine 720, tyrosine 731, tyrosine 742, tyrosine 754, tyrosine 762, and tyrosine 768. Residue aspartate 818 is the Proton acceptor of the active site. Tyrosine 849, tyrosine 988, and tyrosine 1018 each carry phosphotyrosine; by autocatalysis. Residues 1018 to 1089 form a disordered region; sequence YIIPLPDIDP…SSDLVEDSFL (72 aa). The span at 1041–1059 shows a compositional bias: polar residues; it reads SSQTSEESAIETGSSSSTF. The segment covering 1065 to 1089 has biased composition (acidic residues); it reads ETIEDIDMMDDIGIDSSDLVEDSFL.

Belongs to the protein kinase superfamily. Tyr protein kinase family. CSF-1/PDGF receptor subfamily. Interacts with homodimeric PDGFA, PDGFB and PDGFC, and with heterodimers formed by PDGFA and PDGFB. Monomer in the absence of bound ligand. Interaction with dimeric PDGFA, PDGFB and/or PDGFC leads to receptor dimerization, where both PDGFRA homodimers and heterodimers with PDGFRB are observed. Interacts (tyrosine phosphorylated) with SHB (via SH2 domain). Interacts (tyrosine phosphorylated) with SHF (via SH2 domain). Interacts (tyrosine phosphorylated) with SRC (via SH2 domain). Interacts (tyrosine phosphorylated) with PIK3R1. Interacts (tyrosine phosphorylated) with PLCG1 (via SH2 domain). Interacts (tyrosine phosphorylated) with CRK, GRB2 and GRB7. Interacts with CD248; this interaction promotes PDGF receptor signaling pathway. In terms of processing, ubiquitinated, leading to its internalization and degradation. Autophosphorylated on tyrosine residues upon ligand binding. Autophosphorylation occurs in trans, i.e. one subunit of the dimeric receptor phosphorylates tyrosine residues on the other subunit. Phosphorylation at Tyr-731 and Tyr-742 is important for interaction with PIK3R1. Phosphorylation at Tyr-720 and Tyr-754 is important for interaction with PTPN11. Phosphorylation at Tyr-762 is important for interaction with CRK. Phosphorylation at Tyr-572 and Tyr-574 is important for interaction with SRC and SRC family members. Phosphorylation at Tyr-988 and Tyr-1018 is important for interaction with PLCG1. In terms of tissue distribution, focally expressed in cortical interstitial cells and highly expressed in the interstitium of the papillary region. Also expressed by adventitial cells in arterial vessels. Up-regulated in areas of renal fibrosis. In mice with unilateral ureteral obstruction, expression in cortical interstitial cells becomes prominent at day 4 which increases progressively until day 14.

It is found in the cell membrane. The protein localises to the cell projection. It localises to the cilium. Its subcellular location is the golgi apparatus. The catalysed reaction is L-tyrosyl-[protein] + ATP = O-phospho-L-tyrosyl-[protein] + ADP + H(+). With respect to regulation, present in an inactive conformation in the absence of bound ligand. Binding of PDGFA and/or PDGFB leads to dimerization and activation by autophosphorylation on tyrosine residues. Inhibited by imatinib, nilotinib and sorafenib. Tyrosine-protein kinase that acts as a cell-surface receptor for PDGFA, PDGFB and PDGFC and plays an essential role in the regulation of embryonic development, cell proliferation, survival and chemotaxis. Depending on the context, promotes or inhibits cell proliferation and cell migration. Plays an important role in the differentiation of bone marrow-derived mesenchymal stem cells. Required for normal skeleton development and cephalic closure during embryonic development. Required for normal development of the mucosa lining the gastrointestinal tract, and for recruitment of mesenchymal cells and normal development of intestinal villi. Plays a role in cell migration and chemotaxis in wound healing. Plays a role in platelet activation, secretion of agonists from platelet granules, and in thrombin-induced platelet aggregation. Binding of its cognate ligands - homodimeric PDGFA, homodimeric PDGFB, heterodimers formed by PDGFA and PDGFB or homodimeric PDGFC -leads to the activation of several signaling cascades; the response depends on the nature of the bound ligand and is modulated by the formation of heterodimers between PDGFRA and PDGFRB. Phosphorylates PIK3R1, PLCG1, and PTPN11. Activation of PLCG1 leads to the production of the cellular signaling molecules diacylglycerol and inositol 1,4,5-trisphosphate, mobilization of cytosolic Ca(2+) and the activation of protein kinase C. Phosphorylates PIK3R1, the regulatory subunit of phosphatidylinositol 3-kinase, and thereby mediates activation of the AKT1 signaling pathway. Mediates activation of HRAS and of the MAP kinases MAPK1/ERK2 and/or MAPK3/ERK1. Promotes activation of STAT family members STAT1, STAT3 and STAT5A and/or STAT5B. Receptor signaling is down-regulated by protein phosphatases that dephosphorylate the receptor and its down-stream effectors, and by rapid internalization of the activated receptor. The sequence is that of Platelet-derived growth factor receptor alpha (Pdgfra) from Mus musculus (Mouse).